The following is a 31-amino-acid chain: Cytochrome b6-f complex subunit 6 (31 aa).

The helical transmembrane segment at isoleucine 4–glycine 24 threads the bilayer.

It belongs to the PetL family. In terms of assembly, the 4 large subunits of the cytochrome b6-f complex are cytochrome b6, subunit IV (17 kDa polypeptide, PetD), cytochrome f and the Rieske protein, while the 4 small subunits are PetG, PetL, PetM and PetN. The complex functions as a dimer.

The protein localises to the plastid. It localises to the chloroplast thylakoid membrane. In terms of biological role, component of the cytochrome b6-f complex, which mediates electron transfer between photosystem II (PSII) and photosystem I (PSI), cyclic electron flow around PSI, and state transitions. PetL is important for photoautotrophic growth as well as for electron transfer efficiency and stability of the cytochrome b6-f complex. The protein is Cytochrome b6-f complex subunit 6 of Saccharum barberi (Indian sugarcane).